Reading from the N-terminus, the 359-residue chain is UPF0496 protein At3g57100 (359 aa).

The stretch at 179-208 forms a coiled coil; sequence HEELAKMVVKLEKTMKDIDKKLRRVRGRRA. The chain crosses the membrane as a helical span at residues 214 to 234; that stretch reads LLAPVIAVIFLSKLVAGLVPI.

This sequence belongs to the UPF0496 family.

Its subcellular location is the membrane. This Arabidopsis thaliana (Mouse-ear cress) protein is UPF0496 protein At3g57100.